The chain runs to 375 residues: Growth/differentiation factor 8 (375 aa).

The N-terminal stretch at 1–18 (MQKLQIFVYIYLFMLTVA) is a signal peptide. Residues 19 to 266 (GPVDLNENSE…VTDTPKRARR (248 aa)) constitute a propeptide that is removed on maturation. N-linked (GlcNAc...) asparagine glycans are attached at residues N48 and N71. Intrachain disulfides connect C272-C282, C281-C340, C309-C372, and C313-C374.

This sequence belongs to the TGF-beta family. In terms of assembly, homodimer; disulfide-linked. Interacts with WFIKKN2, leading to inhibit its activity. Interacts with FSTL3. Post-translationally, synthesized as large precursor molecule that undergoes proteolytic cleavage to generate an N-terminal propeptide and a disulfide linked C-terminal dimer, which is the biologically active molecule. The circulating form consists of a latent complex of the C-terminal dimer and other proteins, including its propeptide, which maintain the C-terminal dimer in a latent, inactive state. Ligand activation requires additional cleavage of the prodomain by a tolloid-like metalloproteinase.

It is found in the secreted. Functionally, acts specifically as a negative regulator of skeletal muscle growth. The protein is Growth/differentiation factor 8 (MSTN) of Sylvicapra grimmia (Grey duiker).